The following is a 148-amino-acid chain: Large ribosomal subunit protein bL9 (148 aa).

Belongs to the bacterial ribosomal protein bL9 family.

Its function is as follows. Binds to the 23S rRNA. The chain is Large ribosomal subunit protein bL9 from Bacillus mycoides (strain KBAB4) (Bacillus weihenstephanensis).